Consider the following 463-residue polypeptide: Lactaldehyde dehydrogenase (463 aa).

220–225 (GSSKVG) provides a ligand contact to NAD(+). Active-site residues include E240 and C274.

Belongs to the aldehyde dehydrogenase family. Homotetramer.

The catalysed reaction is (S)-lactaldehyde + NAD(+) + H2O = (S)-lactate + NADH + 2 H(+). Its pathway is cofactor biosynthesis; coenzyme F420 biosynthesis. Its function is as follows. Involved in F420 biosynthesis through the oxidation of lactaldehyde to lactate. The substrate preference order is propionaldehyde &gt; DL-lactaldehyde, DL-glyceraldehyde &gt; crotonaldehyde &gt; glycolaldehyde &gt; acetaldehyde, acrolein &gt; formaldehyde. No activity was observed towards methylglyoxal or glyceraldehyde-3-phosphate. Has a preference for NAD over NADP. This Methanocaldococcus jannaschii (strain ATCC 43067 / DSM 2661 / JAL-1 / JCM 10045 / NBRC 100440) (Methanococcus jannaschii) protein is Lactaldehyde dehydrogenase.